A 109-amino-acid polypeptide reads, in one-letter code: MAFAGILNDADITAALAACKAEGSFDHKAFFTKVGLAAKSPADIKKVFEIIDQDKSDFVEEDELKLFLQNFSAGARALSDAETKVFLKAGDSDGDGKIGVDEFGAMIKA.

Ala2 is subject to N-acetylalanine. 2 consecutive EF-hand domains span residues 39–74 (KSPA…FSAG) and 78–109 (LSDA…MIKA). 11 residues coordinate Ca(2+): Asp52, Asp54, Ser56, Phe58, Glu60, Glu63, Asp91, Asp93, Asp95, Lys97, and Glu102.

Belongs to the parvalbumin family. As to quaternary structure, monomer.

In muscle, parvalbumin is thought to be involved in relaxation after contraction. It binds two calcium ions. The protein is Parvalbumin beta 2 of Gadus morhua (Atlantic cod).